A 445-amino-acid polypeptide reads, in one-letter code: C4-dicarboxylate transport protein (445 aa).

A run of 8 helical transmembrane segments spans residues 24–44, 62–82, 105–125, 163–183, 201–221, 237–257, 322–342, and 370–390; these read VLYIQVLIAIVLGVLVGWLSP, LIKMVIAPIIFCTVVSGIAHI, FALILGLVVGNLLPVGHGLAA, GDILQVLLFAILFGFALMALG, FGVIAIVMKAAPVGAFGAMAF, LVALFYATAALFVFVVLGVIA, IYMTLATLFIAQALGIELSFS, and AGTLAAVNPALVPGMAIVFSI.

Belongs to the dicarboxylate/amino acid:cation symporter (DAACS) (TC 2.A.23) family.

It is found in the cell inner membrane. Responsible for the transport of dicarboxylates such as succinate, fumarate, and malate from the periplasm across the membrane. The sequence is that of C4-dicarboxylate transport protein from Rhodopseudomonas palustris (strain HaA2).